A 207-amino-acid polypeptide reads, in one-letter code: Octanoyltransferase (207 aa).

In terms of domain architecture, BPL/LPL catalytic spans 27-203; that stretch reads ASTEDELWVV…HLETQFTPKA (177 aa). Residues 66–73, 133–135, and 146–148 contribute to the substrate site; these read RGGQITYH, SLG, and GLA. Residue Cys-164 is the Acyl-thioester intermediate of the active site.

It belongs to the LipB family.

The protein resides in the cytoplasm. The enzyme catalyses octanoyl-[ACP] + L-lysyl-[protein] = N(6)-octanoyl-L-lysyl-[protein] + holo-[ACP] + H(+). Its pathway is protein modification; protein lipoylation via endogenous pathway; protein N(6)-(lipoyl)lysine from octanoyl-[acyl-carrier-protein]: step 1/2. Functionally, catalyzes the transfer of endogenously produced octanoic acid from octanoyl-acyl-carrier-protein onto the lipoyl domains of lipoate-dependent enzymes. Lipoyl-ACP can also act as a substrate although octanoyl-ACP is likely to be the physiological substrate. In Neisseria meningitidis serogroup C / serotype 2a (strain ATCC 700532 / DSM 15464 / FAM18), this protein is Octanoyltransferase.